The chain runs to 202 residues: Pectinesterase inhibitor 11 (202 aa).

A signal peptide spans 1 to 21; that stretch reads MAKQIFYTLFLFLLSTAILTA. A disulfide bond links C43 and C52. A glycan (N-linked (GlcNAc...) asparagine) is linked at N76. Residues C109 and C160 are joined by a disulfide bond.

It belongs to the PMEI family.

The protein localises to the secreted. It is found in the extracellular space. Its subcellular location is the apoplast. Functionally, pectin methylesterase (PME) inhibitor involved in the maintenance of cell wall integrity in response to necrotrophic pathogens. Modulates PME activity and pectin methylesterification during infection by Botrytis cinerea and contributes to resistance against the pathogen. The sequence is that of Pectinesterase inhibitor 11 from Arabidopsis thaliana (Mouse-ear cress).